The chain runs to 359 residues: 3-isopropylmalate dehydrogenase (359 aa).

76-89 provides a ligand contact to NAD(+); it reads GPKWDDPSAKTRPE. Residues Arg-96, Arg-106, Arg-134, and Asp-223 each contribute to the substrate site. 3 residues coordinate Mg(2+): Asp-223, Asp-247, and Asp-251. 281–293 is a binding site for NAD(+); that stretch reads GSAPDIAGKSVAN.

This sequence belongs to the isocitrate and isopropylmalate dehydrogenases family. LeuB type 1 subfamily. Homodimer. The cofactor is Mg(2+). It depends on Mn(2+) as a cofactor.

The protein localises to the cytoplasm. The catalysed reaction is (2R,3S)-3-isopropylmalate + NAD(+) = 4-methyl-2-oxopentanoate + CO2 + NADH. It participates in amino-acid biosynthesis; L-leucine biosynthesis; L-leucine from 3-methyl-2-oxobutanoate: step 3/4. Catalyzes the oxidation of 3-carboxy-2-hydroxy-4-methylpentanoate (3-isopropylmalate) to 3-carboxy-4-methyl-2-oxopentanoate. The product decarboxylates to 4-methyl-2 oxopentanoate. The chain is 3-isopropylmalate dehydrogenase from Rhodopirellula baltica (strain DSM 10527 / NCIMB 13988 / SH1).